A 221-amino-acid chain; its full sequence is uncharacterized protein (221 aa).

The interval 1–30 is disordered; sequence MVPPNPAHQPARRTQPQLQPQSQPRAQPLP. Positions 12-25 are enriched in polar residues; that stretch reads RRTQPQLQPQSQPR. The helical transmembrane segment at 37-57 threads the bilayer; the sequence is VLCIIVALVLLGLLVGLAILI.

Its subcellular location is the membrane. This is an uncharacterized protein from Arabidopsis thaliana (Mouse-ear cress).